The following is an 84-amino-acid chain: Small ribosomal subunit protein bS16 (84 aa).

This sequence belongs to the bacterial ribosomal protein bS16 family.

In Burkholderia multivorans (strain ATCC 17616 / 249), this protein is Small ribosomal subunit protein bS16.